Consider the following 85-residue polypeptide: MKSEIHPDYHYVIFNDLASGEKILTRTTANSDKTAEWTDGNTYPVIDVEISAASHPFYTGKQRIMDTAGRVERFNARFKGFGGKK.

It belongs to the bacterial ribosomal protein bL31 family. Type B subfamily. In terms of assembly, part of the 50S ribosomal subunit.

The polypeptide is Large ribosomal subunit protein bL31B (Micrococcus luteus (strain ATCC 4698 / DSM 20030 / JCM 1464 / CCM 169 / CCUG 5858 / IAM 1056 / NBRC 3333 / NCIMB 9278 / NCTC 2665 / VKM Ac-2230) (Micrococcus lysodeikticus)).